We begin with the raw amino-acid sequence, 140 residues long: 3-hydroxyacyl-[acyl-carrier-protein] dehydratase FabZ (140 aa).

H47 is a catalytic residue.

Belongs to the thioester dehydratase family. FabZ subfamily.

Its subcellular location is the cytoplasm. It catalyses the reaction a (3R)-hydroxyacyl-[ACP] = a (2E)-enoyl-[ACP] + H2O. Its function is as follows. Involved in unsaturated fatty acids biosynthesis. Catalyzes the dehydration of short chain beta-hydroxyacyl-ACPs and long chain saturated and unsaturated beta-hydroxyacyl-ACPs. The protein is 3-hydroxyacyl-[acyl-carrier-protein] dehydratase FabZ of Streptococcus agalactiae serotype III (strain NEM316).